The chain runs to 331 residues: Protein PER1 homolog (331 aa).

The signal sequence occupies residues 1–24; that stretch reads MRVLRNFTIFFLFTALSLFRQISA. The Lumenal segment spans residues 25-100; that stretch reads SAGDLHPVYV…QYHGKWYFIR (76 aa). A helical transmembrane segment spans residues 101–121; sequence VFGIQELFSVFFSMLNFMIHY. The Cytoplasmic segment spans residues 122–139; that stretch reads NGYHIMRRCIPDEHPAKR. A helical transmembrane segment spans residues 140–160; it reads LCLSWAIVGMNAWVWSSVFHI. Topologically, residues 161-168 are lumenal; sequence RDTPITEK. The helical transmembrane segment at 169-189 threads the bilayer; the sequence is LDYFSAGAFVLFGSYCTLILM. Over 190 to 199 the chain is Cytoplasmic; that stretch reads LRLDQLPGGK. The chain crosses the membrane as a helical span at residues 200-220; it reads LLCWIIGVIFIAAFIAHVSYL. Over 221–232 the chain is Lumenal; sequence SFYSFDYGYNMK. The helical transmembrane segment at 233–250 threads the bilayer; it reads ANVAVGLVQNILWYYYSW. The Cytoplasmic portion of the chain corresponds to 251–263; that stretch reads SNRNSGLYWTRWP. Residues 264–284 form a helical membrane-spanning segment; the sequence is AYIVTSLMLATSLELFDFSPI. Over 285–289 the chain is Lumenal; sequence ANLID. The helical transmembrane segment at 290–310 threads the bilayer; that stretch reads AHALWHLSTVPITHYLYGFVV. Residues 311 to 331 lie on the Cytoplasmic side of the membrane; the sequence is RKCSYDLTKGTFKIKAYDSSR.

This sequence belongs to the PGAP3/PER1 family.

It is found in the endoplasmic reticulum membrane. It localises to the vacuole membrane. In terms of biological role, involved in the lipid remodeling steps of GPI-anchor maturation. Lipid remodeling steps consist in the generation of 2 saturated fatty chains at the sn-2 position of GPI-anchors proteins. Required for phospholipase A2 activity that removes an acyl-chain at the sn-2 position of GPI-anchors during the remodeling of GPI. Required for efficient transport of GPI-anchor proteins. The polypeptide is Protein PER1 homolog (Schizosaccharomyces pombe (strain 972 / ATCC 24843) (Fission yeast)).